Reading from the N-terminus, the 291-residue chain is MEAPASAQTPHPHEPISFGIDQILNSPDQDSAPAPRGPDGASYLGGPPGGRPGAAYPSLPASFAGLGAPFEDAGSYSVNLSLAPAGVIRVPAHRPLPGAVPPPLPSALPAMPSVPTVSSLGGLNFPWMESSRRFVKDRFTAAAALTPFTVTRRIGHPYQNRTPPKRKKPRTSFSRVQICELEKRFHRQKYLASAERAALAKSLKMTDAQVKTWFQNRRTKWRRQTAEEREAERQQASRLMLQLQHDAFQKSLNDSIQPDPLCLHNSSLFALQNLQPWEEDSSKVPAVTSLV.

Positions Met-1–Arg-51 are disordered. A DNA-binding region (homeobox) is located at residues Arg-166–Thr-225.

The protein localises to the nucleus. The polypeptide is T-cell leukemia homeobox protein 3 (Tlx3) (Mus musculus (Mouse)).